Consider the following 332-residue polypeptide: tRNA dimethylallyltransferase (332 aa).

30 to 37 provides a ligand contact to ATP; sequence GPTAVGKT. A substrate-binding site is contributed by 32 to 37; sequence TAVGKT. The interval 57–60 is interaction with substrate tRNA; sequence DSMQ.

The protein belongs to the IPP transferase family. As to quaternary structure, monomer. The cofactor is Mg(2+).

The enzyme catalyses adenosine(37) in tRNA + dimethylallyl diphosphate = N(6)-dimethylallyladenosine(37) in tRNA + diphosphate. In terms of biological role, catalyzes the transfer of a dimethylallyl group onto the adenine at position 37 in tRNAs that read codons beginning with uridine, leading to the formation of N6-(dimethylallyl)adenosine (i(6)A). This chain is tRNA dimethylallyltransferase, found in Natranaerobius thermophilus (strain ATCC BAA-1301 / DSM 18059 / JW/NM-WN-LF).